A 354-amino-acid chain; its full sequence is Probable cinnamyl alcohol dehydrogenase 5 (354 aa).

C43 is a Zn(2+) binding site. S45 provides a ligand contact to NADP(+). 7 residues coordinate Zn(2+): H65, E66, C96, C99, C102, C110, and C159. Residues T163, 184–189 (GLGGLG), 207–212 (SSSPGK), T247, G271, and 294–296 (SCI) contribute to the NADP(+) site.

This sequence belongs to the zinc-containing alcohol dehydrogenase family. As to quaternary structure, homodimer. It depends on Zn(2+) as a cofactor.

The catalysed reaction is (E)-cinnamyl alcohol + NADP(+) = (E)-cinnamaldehyde + NADPH + H(+). It catalyses the reaction (E)-coniferol + NADP(+) = (E)-coniferaldehyde + NADPH + H(+). The enzyme catalyses (E)-sinapyl alcohol + NADP(+) = (E)-sinapaldehyde + NADPH + H(+). It carries out the reaction (E)-4-coumaroyl alcohol + NADP(+) = (E)-4-coumaraldehyde + NADPH + H(+). The catalysed reaction is (E)-caffeyl alcohol + NADP(+) = (E)-caffeyl aldehyde + NADPH + H(+). The protein operates within aromatic compound metabolism; phenylpropanoid biosynthesis. In terms of biological role, involved in lignin biosynthesis. Catalyzes the final step specific for the production of lignin monomers. Catalyzes the NADPH-dependent reduction of coniferaldehyde, 5-hydroxyconiferaldehyde, sinapaldehyde, 4-coumaraldehyde and caffeyl aldehyde to their respective alcohols. In Oryza sativa subsp. japonica (Rice), this protein is Probable cinnamyl alcohol dehydrogenase 5.